A 794-amino-acid chain; its full sequence is Inactive zinc metalloprotease C354.09c (794 aa).

The tract at residues 1–56 (MTDEKHVYVPPPKDPPSYEEVALHSALNNSAPPNDGEQNETSMEEMEIIEPPSEDS) is disordered. Residues 91–111 (IPFQFLYLAVIATVIILASYY) form a helical membrane-spanning segment.

The protein belongs to the peptidase M28 family. M28B subfamily.

It is found in the membrane. The polypeptide is Inactive zinc metalloprotease C354.09c (Schizosaccharomyces pombe (strain 972 / ATCC 24843) (Fission yeast)).